The chain runs to 120 residues: Small ribosomal subunit protein uS13 (120 aa).

Residues 93 to 120 (GLPVRGQNTKNNARTRKGPRRTVANKKK) are disordered. Residues 105–120 (ARTRKGPRRTVANKKK) are compositionally biased toward basic residues.

The protein belongs to the universal ribosomal protein uS13 family. In terms of assembly, part of the 30S ribosomal subunit. Has been shown to cross-link to S19 forming a loose heterodimer. Forms two bridges to the 50S subunit in the 70S ribosome.

Its function is as follows. Located at the top of the head of the 30S subunit, it contacts several helices of the 16S rRNA. In the 70S ribosome it contacts the 23S rRNA (bridge B1a) and protein L5 of the 50S subunit (bridge B1b), connecting the 2 subunits; these bridges are implicated in subunit movement. Contacts the tRNA in the A and P-sites. This Geobacillus stearothermophilus (Bacillus stearothermophilus) protein is Small ribosomal subunit protein uS13 (rpsM).